The following is a 394-amino-acid chain: NAD(P)H-quinone oxidoreductase subunit H (394 aa).

This sequence belongs to the complex I 49 kDa subunit family. As to quaternary structure, NDH-1 can be composed of about 15 different subunits; different subcomplexes with different compositions have been identified which probably have different functions.

It localises to the cellular thylakoid membrane. It carries out the reaction a plastoquinone + NADH + (n+1) H(+)(in) = a plastoquinol + NAD(+) + n H(+)(out). The enzyme catalyses a plastoquinone + NADPH + (n+1) H(+)(in) = a plastoquinol + NADP(+) + n H(+)(out). Functionally, NDH-1 shuttles electrons from an unknown electron donor, via FMN and iron-sulfur (Fe-S) centers, to quinones in the respiratory and/or the photosynthetic chain. The immediate electron acceptor for the enzyme in this species is believed to be plastoquinone. Couples the redox reaction to proton translocation, and thus conserves the redox energy in a proton gradient. Cyanobacterial NDH-1 also plays a role in inorganic carbon-concentration. This Thermosynechococcus vestitus (strain NIES-2133 / IAM M-273 / BP-1) protein is NAD(P)H-quinone oxidoreductase subunit H.